The following is a 364-amino-acid chain: Ferrochelatase (364 aa).

The Fe cation site is built by His-211 and Glu-292.

It belongs to the ferrochelatase family.

It is found in the cytoplasm. The enzyme catalyses heme b + 2 H(+) = protoporphyrin IX + Fe(2+). Its pathway is porphyrin-containing compound metabolism; protoheme biosynthesis; protoheme from protoporphyrin-IX: step 1/1. Functionally, catalyzes the ferrous insertion into protoporphyrin IX. In Nitrosomonas europaea (strain ATCC 19718 / CIP 103999 / KCTC 2705 / NBRC 14298), this protein is Ferrochelatase.